Reading from the N-terminus, the 236-residue chain is Small ribosomal subunit protein uS2c (236 aa).

Belongs to the universal ribosomal protein uS2 family.

Its subcellular location is the plastid. It localises to the chloroplast. In Crucihimalaya wallichii (Rock-cress), this protein is Small ribosomal subunit protein uS2c (rps2).